The chain runs to 102 residues: Integration host factor subunit beta (102 aa).

Belongs to the bacterial histone-like protein family. Heterodimer of an alpha and a beta chain.

Its function is as follows. This protein is one of the two subunits of integration host factor, a specific DNA-binding protein that functions in genetic recombination as well as in transcriptional and translational control. This Rhizobium rhizogenes (strain K84 / ATCC BAA-868) (Agrobacterium radiobacter) protein is Integration host factor subunit beta.